The chain runs to 70 residues: Large ribosomal subunit protein bL31 (70 aa).

Zn(2+) is bound by residues C16, C18, C37, and C40.

This sequence belongs to the bacterial ribosomal protein bL31 family. Type A subfamily. In terms of assembly, part of the 50S ribosomal subunit. Zn(2+) serves as cofactor.

In terms of biological role, binds the 23S rRNA. The sequence is that of Large ribosomal subunit protein bL31 from Glaesserella parasuis serovar 5 (strain SH0165) (Haemophilus parasuis).